We begin with the raw amino-acid sequence, 156 residues long: SsrA-binding protein (156 aa).

The protein belongs to the SmpB family.

It localises to the cytoplasm. Required for rescue of stalled ribosomes mediated by trans-translation. Binds to transfer-messenger RNA (tmRNA), required for stable association of tmRNA with ribosomes. tmRNA and SmpB together mimic tRNA shape, replacing the anticodon stem-loop with SmpB. tmRNA is encoded by the ssrA gene; the 2 termini fold to resemble tRNA(Ala) and it encodes a 'tag peptide', a short internal open reading frame. During trans-translation Ala-aminoacylated tmRNA acts like a tRNA, entering the A-site of stalled ribosomes, displacing the stalled mRNA. The ribosome then switches to translate the ORF on the tmRNA; the nascent peptide is terminated with the 'tag peptide' encoded by the tmRNA and targeted for degradation. The ribosome is freed to recommence translation, which seems to be the essential function of trans-translation. This chain is SsrA-binding protein, found in Thermoanaerobacter pseudethanolicus (strain ATCC 33223 / 39E) (Clostridium thermohydrosulfuricum).